The chain runs to 226 residues: Putative 5'-nucleotidase alr3139 (226 aa).

A divalent metal cation contacts are provided by Asp8, Asp9, Ser38, and Asn89.

It belongs to the SurE nucleotidase family. The cofactor is a divalent metal cation.

It localises to the cytoplasm. It catalyses the reaction a ribonucleoside 5'-phosphate + H2O = a ribonucleoside + phosphate. Functionally, nucleotidase that shows phosphatase activity on nucleoside 5'-monophosphates. The chain is Putative 5'-nucleotidase alr3139 from Nostoc sp. (strain PCC 7120 / SAG 25.82 / UTEX 2576).